A 432-amino-acid chain; its full sequence is Glutamate-1-semialdehyde 2,1-aminomutase (432 aa).

The residue at position 265 (Lys-265) is an N6-(pyridoxal phosphate)lysine.

It belongs to the class-III pyridoxal-phosphate-dependent aminotransferase family. HemL subfamily. As to quaternary structure, homodimer. Pyridoxal 5'-phosphate serves as cofactor.

The protein resides in the cytoplasm. The catalysed reaction is (S)-4-amino-5-oxopentanoate = 5-aminolevulinate. It functions in the pathway porphyrin-containing compound metabolism; protoporphyrin-IX biosynthesis; 5-aminolevulinate from L-glutamyl-tRNA(Glu): step 2/2. This Photobacterium profundum (strain SS9) protein is Glutamate-1-semialdehyde 2,1-aminomutase.